We begin with the raw amino-acid sequence, 28 residues long: Humanin-like 2 (28 aa).

The protein belongs to the humanin family. In terms of tissue distribution, highly expressed in testis. Also expressed in kidney, heart, skeletal muscles and brain.

It is found in the secreted. The protein resides in the cytoplasm. Plays a role as a neuroprotective and antiapoptotic factor. The chain is Humanin-like 2 from Homo sapiens (Human).